Reading from the N-terminus, the 523-residue chain is WD repeat-containing protein WDS homolog (523 aa).

Positions 16-48 (KKHEFIRILVQCLYSLGFKNSASCLEFESKILY) constitute a LisH domain. A CTLH domain is found at 49 to 107 (KTADSEFLEKQVLSGNWDSCVQVLDRIFDNSMDDTRNTALYLVFKQCLLEYLKRGDVSL). 7 WD repeats span residues 222–261 (AHKN…KVEL), 267–306 (SHQN…LRHT), 310–353 (NNTG…KAWR), 355–394 (TRIP…ERVI), 395–434 (SEEQ…KQPL), 438–480 (GHRQ…PLEV), and 483–523 (GHSM…KPLN).

Interacts with RANBPM.

The protein localises to the cytoplasm. This Arabidopsis thaliana (Mouse-ear cress) protein is WD repeat-containing protein WDS homolog.